The primary structure comprises 251 residues: Tritrans,polycis-undecaprenyl-diphosphate synthase (geranylgeranyl-diphosphate specific) (251 aa).

Asp-29 is an active-site residue. Residue Asp-29 participates in Mg(2+) binding. Residues Gly-30–Arg-33, Phe-34, His-46, and Ser-74–Glu-76 each bind substrate. The active-site Proton acceptor is Asn-77. Residues Phe-78, Arg-80, Arg-200, and Arg-206–Ser-208 contribute to the substrate site.

The protein belongs to the UPP synthase family. In terms of assembly, homodimer. The cofactor is Mg(2+).

It carries out the reaction geranylgeranyl diphosphate + 7 isopentenyl diphosphate = tri-trans,hepta-cis-undecaprenyl diphosphate + 7 diphosphate. Catalyzes the sequential condensation of isopentenyl diphosphate (IPP) with geranylgeranyl diphosphate (GGPP) to yield (2Z,6Z,10Z,14Z,18Z,22Z,26Z,30E,34E,38E)-undecaprenyl diphosphate (tritrans,heptacis-UPP). It is probably the precursor of glycosyl carrier lipids. The sequence is that of Tritrans,polycis-undecaprenyl-diphosphate synthase (geranylgeranyl-diphosphate specific) from Archaeoglobus fulgidus (strain ATCC 49558 / DSM 4304 / JCM 9628 / NBRC 100126 / VC-16).